A 289-amino-acid polypeptide reads, in one-letter code: Glucosamine-6-phosphate deaminase 1 (289 aa).

The active-site Proton acceptor; for enolization step is the D72. D141 functions as the For ring-opening step in the catalytic mechanism. The active-site Proton acceptor; for ring-opening step is H143. E148 serves as the catalytic For ring-opening step. T161 bears the Phosphothreonine mark.

The protein belongs to the glucosamine/galactosamine-6-phosphate isomerase family. In terms of assembly, homohexamer. As to expression, widely expressed. Detected in brain, liver, kidney, muscle, ovary, testis, spermatids and spermatozoa. In spermatids, located close to the developing acrosome vesicle. In spermatozoa, found close to the acrosomal region.

The protein localises to the cytoplasm. It catalyses the reaction alpha-D-glucosamine 6-phosphate + H2O = beta-D-fructose 6-phosphate + NH4(+). It participates in nucleotide-sugar biosynthesis; UDP-N-acetyl-alpha-D-glucosamine biosynthesis; alpha-D-glucosamine 6-phosphate from D-fructose 6-phosphate: step 1/1. Its activity is regulated as follows. Allosterically activated by N-acetylglucosamine-6-phosphate (GlcNAc6P). Its function is as follows. Catalyzes the reversible conversion of alpha-D-glucosamine 6-phosphate (GlcN-6P) into beta-D-fructose 6-phosphate (Fru-6P) and ammonium ion, a regulatory reaction step in de novo uridine diphosphate-N-acetyl-alpha-D-glucosamine (UDP-GlcNAc) biosynthesis via hexosamine pathway. Deamination is coupled to aldo-keto isomerization mediating the metabolic flux from UDP-GlcNAc toward Fru-6P. At high ammonium level can drive amination and isomerization of Fru-6P toward hexosamines and UDP-GlcNAc synthesis. Has a role in fine tuning the metabolic fluctuations of cytosolic UDP-GlcNAc and their effects on hyaluronan synthesis that occur during tissue remodeling. Seems to trigger calcium oscillations in mammalian eggs. These oscillations serve as the essential trigger for egg activation and early development of the embryo. The chain is Glucosamine-6-phosphate deaminase 1 from Mus musculus (Mouse).